Reading from the N-terminus, the 396-residue chain is 1-deoxy-D-xylulose 5-phosphate reductoisomerase (396 aa).

Residues threonine 17, glycine 18, serine 19, isoleucine 20, asparagine 47, and asparagine 130 each contribute to the NADPH site. A 1-deoxy-D-xylulose 5-phosphate-binding site is contributed by lysine 131. Glutamate 132 is an NADPH binding site. Aspartate 156 serves as a coordination point for Mn(2+). 1-deoxy-D-xylulose 5-phosphate contacts are provided by serine 157, glutamate 158, serine 182, and histidine 205. Glutamate 158 lines the Mn(2+) pocket. An NADPH-binding site is contributed by glycine 211. Residues serine 218, asparagine 223, lysine 224, and glutamate 227 each coordinate 1-deoxy-D-xylulose 5-phosphate. Residue glutamate 227 coordinates Mn(2+).

The protein belongs to the DXR family. Mg(2+) serves as cofactor. The cofactor is Mn(2+).

The enzyme catalyses 2-C-methyl-D-erythritol 4-phosphate + NADP(+) = 1-deoxy-D-xylulose 5-phosphate + NADPH + H(+). Its pathway is isoprenoid biosynthesis; isopentenyl diphosphate biosynthesis via DXP pathway; isopentenyl diphosphate from 1-deoxy-D-xylulose 5-phosphate: step 1/6. Functionally, catalyzes the NADPH-dependent rearrangement and reduction of 1-deoxy-D-xylulose-5-phosphate (DXP) to 2-C-methyl-D-erythritol 4-phosphate (MEP). The sequence is that of 1-deoxy-D-xylulose 5-phosphate reductoisomerase from Rhizobium etli (strain CIAT 652).